We begin with the raw amino-acid sequence, 226 residues long: uncharacterized protein (226 aa).

The 223-residue stretch at 4 to 226 (LQFQQVGYWY…FTVKENVAVV (223 aa)) folds into the ABC transporter domain. ATP is bound at residue 38-45 (GTSGTGKT).

The protein belongs to the ABC transporter superfamily.

This is an uncharacterized protein from Bacillus subtilis (strain 168).